The chain runs to 120 residues: MAEESRVPSSVSVTVAHDLLLAGHRYLDVRTPEEFSQGHACGAINVPYMNRGASGMSKNPDFLEQVSSHFGQSDNIIVGCQSGGRSIKATTDLLHAGFTGVKDIVGGYSAWAKNGLPTKA.

A Rhodanese domain is found at 20–120 (LLAGHRYLDV…WAKNGLPTKA (101 aa)). Cys-80 (cysteine persulfide intermediate) is an active-site residue. Arg-85 lines the substrate pocket.

In terms of assembly, monomer.

Its subcellular location is the plastid. It is found in the chloroplast. It carries out the reaction thiosulfate + hydrogen cyanide = thiocyanate + sulfite + 2 H(+). Its function is as follows. Thought to act during the early stages of leaf senescence. Catalyzes the transfer of a sulfur ion from a donor to cyanide or to other thiol compounds. Substrate preference is thiosulfate &gt; 3-mercaptopyruvate. The polypeptide is Thiosulfate sulfurtransferase 16, chloroplastic (STR16) (Arabidopsis thaliana (Mouse-ear cress)).